Reading from the N-terminus, the 520-residue chain is MDEERALYIVRAGEAGAIERVLRDYSDKHRATFKFESADEDKRKKLCEGIFKVLVKEVPTTCQVSCLEVLRILSRDKKILVPVTTKENMQILLRLAKLHESDDSLEKVSEFPVIVESLKCLCNIVFNSQMAQQLSLELNLAAKLCNLLRKCKDRKFINDIKCFDLRLLFVLSLLHTDIRSQLRYELQGLPLLTQILESAFSIKWTDEYESAIDHNGPPLSPQETDCAIEALKALFNVTVDSWKVHKESDSHQFRVMAAVLRHCLLIVGPTEDKTEELHSNAVNLLSNVPVSCLDVLICPLTHEETAQEAATLDELPSDKTTEKDTALKNSTMVYNGMNMEAIHVLLNFMEKRIDKGSSYREGLTPVLSLLTECSRAHRNIRKFLKDQVLPPLRDVTNRPEVGSTVRNKLVRLMTHVDLGVKQIAAEFLFVLCKERVDSLLKYTGYGNAAGLLAARGLLAGGRGDNWYSEDEDTDTEEYKNAKPKEELLKPMGLKPDGTITPLEEALSQYSVIEETSSDTD.

The residue at position 468 (Ser-468) is a Phosphoserine. Thr-473 carries the post-translational modification Phosphothreonine.

The protein belongs to the synembryn family. Interacts with GDP-bound G(s) G-alpha proteins GNAL and GNAS. Does not interact with G-alpha proteins when they are in complex with subunits beta and gamma. As to expression, predominantly expressed in the mature olfactory sensory neurons and also in a few regions in the brain.

The protein localises to the cytoplasm. The protein resides in the cell cortex. Functionally, chaperone that specifically binds and folds nascent G(s) G-alpha proteins (GNAS and GNAL) prior to G protein heterotrimer formation, promoting their association with the plasma membrane. Also acts as a guanine nucleotide exchange factor (GEF) for G(s) proteins by stimulating exchange of bound GDP for free GTP. Acts as an important component for odorant signal transduction by mediating GNAL (G(olf)-alpha) folding, thereby promoting-dependent cAMP accumulation in olfactory sensory neurons. The polypeptide is Chaperone Ric-8B (Mus musculus (Mouse)).